The primary structure comprises 142 residues: Bacilliredoxin ABC2448 (142 aa).

It belongs to the bacilliredoxin family.

The sequence is that of Bacilliredoxin ABC2448 from Shouchella clausii (strain KSM-K16) (Alkalihalobacillus clausii).